Consider the following 269-residue polypeptide: Ribosomal RNA small subunit methyltransferase J (269 aa).

Residues 124-125 (ER) and aspartate 188 contribute to the S-adenosyl-L-methionine site.

This sequence belongs to the methyltransferase superfamily. RsmJ family.

The protein localises to the cytoplasm. The catalysed reaction is guanosine(1516) in 16S rRNA + S-adenosyl-L-methionine = N(2)-methylguanosine(1516) in 16S rRNA + S-adenosyl-L-homocysteine + H(+). Its function is as follows. Specifically methylates the guanosine in position 1516 of 16S rRNA. This chain is Ribosomal RNA small subunit methyltransferase J, found in Saccharophagus degradans (strain 2-40 / ATCC 43961 / DSM 17024).